A 104-amino-acid chain; its full sequence is ATP-dependent Clp protease adapter protein ClpS (104 aa).

It belongs to the ClpS family. Binds to the N-terminal domain of the chaperone ClpA.

Involved in the modulation of the specificity of the ClpAP-mediated ATP-dependent protein degradation. This chain is ATP-dependent Clp protease adapter protein ClpS, found in Paraburkholderia phymatum (strain DSM 17167 / CIP 108236 / LMG 21445 / STM815) (Burkholderia phymatum).